A 605-amino-acid polypeptide reads, in one-letter code: Heparan-sulfate 6-O-sulfotransferase 2 (605 aa).

The Cytoplasmic portion of the chain corresponds to 1-4 (MALP). The disordered stretch occupies residues 1-66 (MALPACAVRE…GVSHGFHTRP (66 aa)). The helical; Signal-anchor for type II membrane protein transmembrane segment at 5–27 (ACAVREFEPPRQPERGAPVRTTC) threads the bilayer. Residues 9–18 (REFEPPRQPE) are compositionally biased toward basic and acidic residues. Topologically, residues 28 to 605 (PRRHSRVEAE…DYIGSVEKWR (578 aa)) are lumenal. N-linked (GlcNAc...) asparagine glycosylation occurs at asparagine 209. 3'-phosphoadenylyl sulfate is bound at residue 233–241 (HIQKTGGTT). Residues 263–264 (KK), arginine 280, tryptophan 285, and histidine 290 each bind substrate. The active-site Proton acceptor is histidine 290. The 3'-phosphoadenylyl sulfate site is built by arginine 325 and serine 333. 2 residues coordinate substrate: histidine 337 and tryptophan 344. Asparagine 404 carries N-linked (GlcNAc...) asparagine glycosylation. 457 to 459 (TQY) contributes to the 3'-phosphoadenylyl sulfate binding site. N-linked (GlcNAc...) asparagine glycosylation is present at asparagine 460. 463–464 (RA) lines the 3'-phosphoadenylyl sulfate pocket. Residues 530–605 (FQSQGQGQSQ…DYIGSVEKWR (76 aa)) are disordered. Positions 531–571 (QSQGQGQSQNPNQNQSQNPNPNANQNLTQNLMQNLTQSLSQ) are enriched in low complexity. Residues asparagine 544, asparagine 556, asparagine 564, asparagine 589, and asparagine 592 are each glycosylated (N-linked (GlcNAc...) asparagine). A compositionally biased stretch (polar residues) spans 579–597 (KQNSGKEQNDNTSNGTNDY).

This sequence belongs to the sulfotransferase 6 family.

The protein resides in the membrane. It carries out the reaction alpha-D-glucosaminyl-[heparan sulfate](n) + 3'-phosphoadenylyl sulfate = 6-sulfo-alpha-D-glucosaminyl-[heparan sulfate](n) + adenosine 3',5'-bisphosphate + H(+). 6-O-sulfation enzyme which catalyzes the transfer of sulfate from 3'-phosphoadenosine 5'-phosphosulfate (PAPS) to position 6 of the N-sulfoglucosamine residue (GlcNS) of heparan sulfate. This Homo sapiens (Human) protein is Heparan-sulfate 6-O-sulfotransferase 2.